The following is a 526-amino-acid chain: Tyrosine-protein kinase transforming protein Src (526 aa).

Residues 1–52 (MGSSKSKPKDPSQRRHSLEPPDSTHHGGFPASQTPDETAAPDAHRNPSRSFG) form a disordered region. Gly-2 is lipidated: N-myristoyl glycine; by host. Residues 7-25 (KPKDPSQRRHSLEPPDSTH) show a composition bias toward basic and acidic residues. 2 SH3 domains span residues 71–139 (TSPQ…YVAP) and 81–142 (GGVT…PSDS). Residues 148-245 (WYFGKITRRE…GLCHRLANVC (98 aa)) form the SH2 domain. Positions 267–517 (LRLEAKLGQG…TFKYLQAQLL (251 aa)) constitute a Protein kinase domain. ATP contacts are provided by residues 273-281 (LGQGCFGEV) and Lys-295. Asp-386 functions as the Proton acceptor in the catalytic mechanism. Tyr-416 is modified (phosphotyrosine; by autocatalysis).

This sequence belongs to the protein kinase superfamily. Tyr protein kinase family. SRC subfamily. Homodimer. In terms of processing, the phosphorylated form is termed pp60v-src.

It carries out the reaction L-tyrosyl-[protein] + ATP = O-phospho-L-tyrosyl-[protein] + ADP + H(+). Functionally, this phosphoprotein, required for both the initiation and the maintenance of neoplastic transformation, is a protein kinase that catalyzes the phosphorylation of tyrosine residues in vitro. In Gallus gallus (Chicken), this protein is Tyrosine-protein kinase transforming protein Src (V-SRC).